Here is a 353-residue protein sequence, read N- to C-terminus: Beta-agarase B (353 aa).

The first 17 residues, 1 to 17 (MYLIYLRLVFCCALLLG), serve as a signal peptide directing secretion. Cys18 is lipidated: N-palmitoyl cysteine. Residue Cys18 is the site of S-diacylglycerol cysteine attachment. Residues 30 to 58 (LPVEQEQEQETEQEGEPEESSEQDLVEEV) are disordered. Acidic residues predominate over residues 32 to 58 (VEQEQEQETEQEGEPEESSEQDLVEEV). In terms of domain architecture, GH16 spans 58-353 (VDWKDIPVPA…WIRIYKPVEK (296 aa)). Residues 105-107 (YHN) and Asp181 contribute to the substrate site. Glu184 serves as the catalytic Nucleophile. The active-site Proton donor is Glu189. The substrate site is built by His215, Arg219, Asp224, Gln226, and Glu308.

This sequence belongs to the glycosyl hydrolase 16 family. Homodimer.

It localises to the cell outer membrane. The catalysed reaction is Hydrolysis of (1-&gt;4)-beta-D-galactosidic linkages in agarose, giving the tetramer as the predominant product.. Its function is as follows. Cleaves the beta-1,4-linkages between beta-D-galactose and alpha-L-3,6-anhydro-galactose residues in agarose. Cleaves agarose in a random manner with retention of the anomeric-bond configuration, producing beta-anomers that give rise progressively to alpha-anomers when mutarotation takes place. Also tolerant to hybrid substrates containing C6-sulfate groups at the -4, +1, and +3 positions. This chain is Beta-agarase B (agaB), found in Zobellia galactanivorans (strain DSM 12802 / CCUG 47099 / CIP 106680 / NCIMB 13871 / Dsij).